The primary structure comprises 95 residues: MSVDQATVRRVAHLARIAVSEEELEPLKGELNAILAFVEQLANLDVADVEPMTGVIPMELPMREDVVTDGHYPEKILANAPEAEGGFFTVPKVVE.

Belongs to the GatC family. Heterotrimer of A, B and C subunits.

The catalysed reaction is L-glutamyl-tRNA(Gln) + L-glutamine + ATP + H2O = L-glutaminyl-tRNA(Gln) + L-glutamate + ADP + phosphate + H(+). It catalyses the reaction L-aspartyl-tRNA(Asn) + L-glutamine + ATP + H2O = L-asparaginyl-tRNA(Asn) + L-glutamate + ADP + phosphate + 2 H(+). Functionally, allows the formation of correctly charged Asn-tRNA(Asn) or Gln-tRNA(Gln) through the transamidation of misacylated Asp-tRNA(Asn) or Glu-tRNA(Gln) in organisms which lack either or both of asparaginyl-tRNA or glutaminyl-tRNA synthetases. The reaction takes place in the presence of glutamine and ATP through an activated phospho-Asp-tRNA(Asn) or phospho-Glu-tRNA(Gln). This is Aspartyl/glutamyl-tRNA(Asn/Gln) amidotransferase subunit C from Azorhizobium caulinodans (strain ATCC 43989 / DSM 5975 / JCM 20966 / LMG 6465 / NBRC 14845 / NCIMB 13405 / ORS 571).